Reading from the N-terminus, the 57-residue chain is uncharacterized protein (57 aa).

A helical transmembrane segment spans residues 10–27 (FGLLWLIIGSEAFHLNAL). A coiled-coil region spans residues 28-55 (KQDHLERMKQYDAKIRLAKHEFDDTSNE).

Its subcellular location is the membrane. This is an uncharacterized protein from Schizosaccharomyces pombe (strain 972 / ATCC 24843) (Fission yeast).